The primary structure comprises 166 residues: Small ribosomal subunit protein uS5 (166 aa).

The region spanning leucine 11–valine 74 is the S5 DRBM domain.

Belongs to the universal ribosomal protein uS5 family. In terms of assembly, part of the 30S ribosomal subunit. Contacts proteins S4 and S8.

In terms of biological role, with S4 and S12 plays an important role in translational accuracy. Located at the back of the 30S subunit body where it stabilizes the conformation of the head with respect to the body. This is Small ribosomal subunit protein uS5 from Cronobacter sakazakii (strain ATCC BAA-894) (Enterobacter sakazakii).